The primary structure comprises 38 residues: Small toxic protein BsrG (38 aa).

A helical membrane pass occupies residues 11 to 31; that stretch reads INFGGLILNTVLLIFNIMMIV.

The protein localises to the cell membrane. Functionally, toxic component of a type I toxin-antitoxin (TA) system; expression in the absence of cognate antisense antitoxin SR4 RNA leads to cell lysis. Induced expression causes membrane invaginations that dislocate the cell wall synthesis machinery, leading to eventual death. Unlike many type I TA systems it does not form pores. Base pairing occurs between the 3' UTRs of bsrG mRNA and SR4 RNA, which leads to initiation of degradation by RNase III (rnc) followed by the action of RNase Y (rny) and RNase R (rnr). Not toxic when expressed in E.coli. When induced during logarithmic growth it only slowly exerts its toxic effect. Expression during log growth leads to significant disturbances of cell envelope biosynthesis and cell morphology, causing cell membrane invaginations and delocalization of cell division and cell wall synthesis machinery. Cell lysis depends on mreB, lytC and lytD, suggesting expression of bsrG triggers autolysis rather than disintegration of the membrane. Additionally expression of bsrG also inhibits transcription. This Bacillus subtilis (strain 168) protein is Small toxic protein BsrG.